We begin with the raw amino-acid sequence, 359 residues long: Opine dehydrogenase (359 aa).

Belongs to the lysopine/nopaline/octopine/opine/vitopine dehydrogenases family. In terms of assembly, homodimer.

The catalysed reaction is (2S)-2-[(R)-1-carboxyethylamino]pentanoate + NAD(+) + H2O = L-2-aminopentanoate + pyruvate + NADH + H(+). In the forward direction also acts on secondary amine dicarboxylates such as N-(1-carboxyethyl)methionine and N-(1-carboxyethyl)phenylalanine. In the reverse direction, the enzyme also acts on neutral amino acids as an amino donor. They include L-amino acids such as 2-aminopentanoic acid, 2-aminobutyric acid, 2-aminohexanoic acid, 3-chloroalanine, O-acetylserine, methionine, isoleucine, valine, phenylalanine, leucine and alanine. In Arthrobacter sp. (strain 1C), this protein is Opine dehydrogenase (odh).